A 93-amino-acid polypeptide reads, in one-letter code: UPF0147 protein PF0239 (93 aa).

The protein belongs to the UPF0147 family.

The protein is UPF0147 protein PF0239 of Pyrococcus furiosus (strain ATCC 43587 / DSM 3638 / JCM 8422 / Vc1).